The chain runs to 200 residues: ATP synthase subunit s, mitochondrial (200 aa).

The transit peptide at 1 to 25 directs the protein to the mitochondrion; that stretch reads MMPFGKISQQLCGVKKLPWSCDSRY. The interval 1–61 is N-terminal domain; it reads MMPFGKISQQ…SEWLLRCGAM (61 aa). A Mg(2+)-binding site is contributed by glycine 59. 4 LRR repeats span residues 62-87, 88-116, 117-141, and 142-173; these read VRYHGQERWQKDYNHLPTGPLDKYKI, QAIDATDSCIMSIGFDHMEGLEHVEKIRL, CKCHYIEDDCLLRLSQLENLQKTIL, and EMEIISCGNITDKGIIALRHLRNLKYLLLSDL. Mg(2+) is bound at residue threonine 93.

Belongs to the ATP synthase subunit s family. Homotetramer. Associates with ATP synthase.

Its subcellular location is the mitochondrion. The protein localises to the mitochondrion inner membrane. Its function is as follows. Involved in regulation of mitochondrial membrane ATP synthase. Necessary for H(+) conduction of ATP synthase. Facilitates energy-driven catalysis of ATP synthesis by blocking a proton leak through an alternative proton exit pathway. The sequence is that of ATP synthase subunit s, mitochondrial from Homo sapiens (Human).